We begin with the raw amino-acid sequence, 460 residues long: Dihydroorotate dehydrogenase (quinone), mitochondrial (460 aa).

Residues 1–32 constitute a mitochondrion transit peptide; sequence MAGRAATSSAKWAREFLFRRVSSNPLGATRNC. Residues 53 to 69 form a helical membrane-spanning segment; sequence ILTGATIGLAIAGGAYV. FMN is bound by residues 141–145 and Ser165; that span reads AGFDK. Residue Lys145 coordinates substrate. Substrate is bound at residue 190–194; sequence NRCGF. Residues 213-245 are disordered; the sequence is RMLAETSATSSSPSDDVKPGGKSGPGILGVNLG. FMN contacts are provided by Asn243 and Asn274. Substrate is bound at residue 274-279; the sequence is NVSSPN. The active-site Nucleophile is the Ser277. FMN-binding residues include Lys319 and Ser347. Position 348–349 (348–349) interacts with substrate; the sequence is NT. FMN is bound by residues Gly371, Gly400, and 421 to 422; that span reads YT.

This sequence belongs to the dihydroorotate dehydrogenase family. Type 2 subfamily. FMN serves as cofactor.

The protein localises to the mitochondrion inner membrane. The enzyme catalyses (S)-dihydroorotate + a quinone = orotate + a quinol. It functions in the pathway pyrimidine metabolism; UMP biosynthesis via de novo pathway; orotate from (S)-dihydroorotate (quinone route): step 1/1. Its function is as follows. Catalyzes the conversion of dihydroorotate to orotate with quinone as electron acceptor. The chain is Dihydroorotate dehydrogenase (quinone), mitochondrial (PYRD) from Arabidopsis thaliana (Mouse-ear cress).